Here is a 136-residue protein sequence, read N- to C-terminus: Small ribosomal subunit protein uS8c (136 aa).

The protein belongs to the universal ribosomal protein uS8 family. Part of the 30S ribosomal subunit.

It localises to the plastid. It is found in the chloroplast. Its function is as follows. One of the primary rRNA binding proteins, it binds directly to 16S rRNA central domain where it helps coordinate assembly of the platform of the 30S subunit. The polypeptide is Small ribosomal subunit protein uS8c (rps8) (Saccharum hybrid (Sugarcane)).